We begin with the raw amino-acid sequence, 298 residues long: 33 kDa chaperonin (298 aa).

Intrachain disulfides connect C239/C241 and C272/C275.

It belongs to the HSP33 family. In terms of processing, under oxidizing conditions two disulfide bonds are formed involving the reactive cysteines. Under reducing conditions zinc is bound to the reactive cysteines and the protein is inactive.

Its subcellular location is the cytoplasm. Functionally, redox regulated molecular chaperone. Protects both thermally unfolding and oxidatively damaged proteins from irreversible aggregation. Plays an important role in the bacterial defense system toward oxidative stress. The sequence is that of 33 kDa chaperonin from Picosynechococcus sp. (strain ATCC 27264 / PCC 7002 / PR-6) (Agmenellum quadruplicatum).